The sequence spans 509 residues: Tyrosine-protein phosphatase non-receptor type substrate 1 (509 aa).

The signal sequence occupies residues 1–31; it reads MEPAGPAPGRLGPLLFCLLLSASCFCAGASG. Residues 32–138 enclose the Ig-like V-type domain; that stretch reads KELKVTQADK…IVEPDTEIKS (107 aa). Residues 32 to 373 are Extracellular-facing; the sequence is KELKVTQADK…PDNNAYYNWN (342 aa). 13 N-linked (GlcNAc...) asparagine glycosylation sites follow: N54, N93, N169, N181, N205, N209, N242, N246, N271, N293, N312, N320, and N345. C55 and C122 are joined by a disulfide. 2 Ig-like C1-type domains span residues 150 to 248 and 255 to 349; these read PSSP…ANFS and PTLK…HTVR. An intrachain disulfide couples C172 to C229. C274 and C332 form a disulfide bridge. The chain crosses the membrane as a helical span at residues 374–394; the sequence is VFIGVGVACALLVVLLMAALY. Topologically, residues 395-509 are cytoplasmic; the sequence is LLRIKQKKAK…EYASVQVQRK (115 aa). Y436 carries the post-translational modification Phosphotyrosine; by Tyr-kinases. An SH2-binding motif is present at residues 436–439; sequence YADL. The interval 441–472 is disordered; that stretch reads LPKEKKPAPRVPEPNNHTEYASIETGKLPRPE. The short motif at 446–451 is the SH3-binding element; sequence KPAPRV. Phosphotyrosine; by Tyr-kinases is present on residues Y460, Y477, and Y501. Short sequence motifs (SH2-binding) lie at residues 460–463, 477–480, and 501–504; these read YASI, YADL, and YASV. The interval 485-509 is disordered; the sequence is LNRAQPTPKPEPSFSEYASVQVQRK. The segment covering 500–509 has biased composition (polar residues); the sequence is EYASVQVQRK.

In terms of assembly, binds PTPN11 when tyrosine-phosphorylated, except in macrophages, where it primarily binds PTPN6. Binds GRB2 in vitro. Binds FGR. Binds JAK2 irrespective of its phosphorylation status and forms a stable complex. Binds SCAP1 and/or SCAP2. The resulting complex recruits FYB1. Binds PTK2B. Interacts with TRIM2. In terms of processing, N-glycosylated. Post-translationally, phosphorylated on tyrosine residues in response to insulin, cell adhesion or epidermal growth factors. Dephosphorylated by PTPN11. In terms of tissue distribution, highly expressed in brain, spleen, lung, liver and kidney. Detected at lower levels in heart. Highly expressed in alveolar and peritoneal macrophages, and at lower levels in dendritic cells.

The protein localises to the membrane. Immunoglobulin-like cell surface receptor for CD47. Acts as docking protein and induces translocation of PTPN6, PTPN11 and other binding partners from the cytosol to the plasma membrane. Supports adhesion of cerebellar neurons, neurite outgrowth and glial cell attachment. May play a key role in intracellular signaling during synaptogenesis and in synaptic function. Involved in the negative regulation of receptor tyrosine kinase-coupled cellular responses induced by cell adhesion, growth factors or insulin. Mediates negative regulation of phagocytosis, mast cell activation and dendritic cell activation. CD47 binding prevents maturation of immature dendritic cells and inhibits cytokine production by mature dendritic cells. Plays a role in antiviral immunity and limits new world arenavirus infection by decreasing virus internalization. Receptor for THBS1. Interaction with THBS1 stimulates phosphorylation of SIRPA. In response to THBS1, involved in ROS signaling in non-phagocytic cells, stimulating NADPH oxidase-derived ROS production. This is Tyrosine-protein phosphatase non-receptor type substrate 1 (Sirpa) from Rattus norvegicus (Rat).